The primary structure comprises 92 residues: Serine rich endogenous peptide 11 (92 aa).

The first 29 residues, 1–29 (MENNTFSSKSINLLILLLLLCTFLCQTES), serve as a signal peptide directing secretion. Residues 50 to 92 (PNTDIGTPSSTSDRGGGGNGRRLMSQMDVGASSSGQGGGRNRH) are disordered. Over residues 53–62 (DIGTPSSTSD) the composition is skewed to polar residues. Short sequence motifs (SCOOP motif) lie at residues 53 to 67 (DIGTPSSTSDRGGGG) and 75 to 89 (QMDVGASSSGQGGGR). 2 consecutive short sequence motifs (sxS motif essential for MIK2 binding) follow at residues 59–61 (STS) and 81–83 (SSS).

This sequence belongs to the serine rich endogenous peptide (SCOOP) phytocytokine family. Interacts with MIK2 (via extracellular leucine-rich repeat domain); this interaction triggers the formation of complex between MIK2 and the BAK1/SERK3 and SERK4 coreceptors, and subsequent BAK1 activation by phosphorylation. As to expression, mostly expressed in seedlings shoots and roots, and, to a lower extent, in leaves.

It localises to the cell membrane. The protein resides in the secreted. Its subcellular location is the extracellular space. It is found in the apoplast. Its function is as follows. Brassicaceae-specific phytocytokine (plant endogenous peptide released into the apoplast) perceived by MIK2 in a BAK1/SERK3 and SERK4 coreceptors-dependent manner, that modulates various physiological and antimicrobial processes including growth prevention and reactive oxygen species (ROS) response regulation. This is Serine rich endogenous peptide 11 from Arabidopsis thaliana (Mouse-ear cress).